We begin with the raw amino-acid sequence, 731 residues long: Elongation factor 2 (731 aa).

Positions 19–260 (KHIRNIGIVA…MVVHHLPNPL (242 aa)) constitute a tr-type G domain. Residues 28-35 (AHIDHGKT), 94-98 (DTPGH), and 148-151 (NKVD) contribute to the GTP site. A Diphthamide modification is found at His-597.

It belongs to the TRAFAC class translation factor GTPase superfamily. Classic translation factor GTPase family. EF-G/EF-2 subfamily.

The protein resides in the cytoplasm. Catalyzes the GTP-dependent ribosomal translocation step during translation elongation. During this step, the ribosome changes from the pre-translocational (PRE) to the post-translocational (POST) state as the newly formed A-site-bound peptidyl-tRNA and P-site-bound deacylated tRNA move to the P and E sites, respectively. Catalyzes the coordinated movement of the two tRNA molecules, the mRNA and conformational changes in the ribosome. The chain is Elongation factor 2 from Methanoregula boonei (strain DSM 21154 / JCM 14090 / 6A8).